The sequence spans 444 residues: Exodeoxyribonuclease 7 large subunit (444 aa).

It belongs to the XseA family. In terms of assembly, heterooligomer composed of large and small subunits.

It localises to the cytoplasm. The catalysed reaction is Exonucleolytic cleavage in either 5'- to 3'- or 3'- to 5'-direction to yield nucleoside 5'-phosphates.. Bidirectionally degrades single-stranded DNA into large acid-insoluble oligonucleotides, which are then degraded further into small acid-soluble oligonucleotides. In Rickettsia canadensis (strain McKiel), this protein is Exodeoxyribonuclease 7 large subunit.